We begin with the raw amino-acid sequence, 84 residues long: Defensin-like protein 37 (84 aa).

Positions 1–24 are cleaved as a signal peptide; the sequence is MAVKLIYLFLFLYIALLISGRTMS. Intrachain disulfides connect C46–C67, C52–C79, and C56–C81.

This sequence belongs to the DEFL family.

The protein resides in the secreted. This is Defensin-like protein 37 (EDA21) from Arabidopsis thaliana (Mouse-ear cress).